Here is a 392-residue protein sequence, read N- to C-terminus: 23S rRNA (uracil(747)-C(5))-methyltransferase RlmC (392 aa).

C4, C12, C15, and C93 together coordinate [4Fe-4S] cluster. Residues Q218, F247, E275, and N321 each contribute to the S-adenosyl-L-methionine site. The Nucleophile role is filled by C348.

The protein belongs to the class I-like SAM-binding methyltransferase superfamily. RNA M5U methyltransferase family. RlmC subfamily.

It catalyses the reaction uridine(747) in 23S rRNA + S-adenosyl-L-methionine = 5-methyluridine(747) in 23S rRNA + S-adenosyl-L-homocysteine + H(+). Catalyzes the formation of 5-methyl-uridine at position 747 (m5U747) in 23S rRNA. The polypeptide is 23S rRNA (uracil(747)-C(5))-methyltransferase RlmC (Haemophilus influenzae (strain ATCC 51907 / DSM 11121 / KW20 / Rd)).